A 154-amino-acid chain; its full sequence is Sec-independent protein translocase protein TatB (154 aa).

Residues 1 to 21 (MIDIGITKLAIIGGIALIVIG) form a helical membrane-spanning segment.

This sequence belongs to the TatB family. The Tat system comprises two distinct complexes: a TatABC complex, containing multiple copies of TatA, TatB and TatC subunits, and a separate TatA complex, containing only TatA subunits. Substrates initially bind to the TatABC complex, which probably triggers association of the separate TatA complex to form the active translocon.

It localises to the cell inner membrane. Its function is as follows. Part of the twin-arginine translocation (Tat) system that transports large folded proteins containing a characteristic twin-arginine motif in their signal peptide across membranes. Together with TatC, TatB is part of a receptor directly interacting with Tat signal peptides. TatB may form an oligomeric binding site that transiently accommodates folded Tat precursor proteins before their translocation. This is Sec-independent protein translocase protein TatB from Albidiferax ferrireducens (strain ATCC BAA-621 / DSM 15236 / T118) (Rhodoferax ferrireducens).